The chain runs to 221 residues: Translation initiation factor 6 (221 aa).

The protein belongs to the eIF-6 family.

In terms of biological role, binds to the 50S ribosomal subunit and prevents its association with the 30S ribosomal subunit to form the 70S initiation complex. The sequence is that of Translation initiation factor 6 from Methanospirillum hungatei JF-1 (strain ATCC 27890 / DSM 864 / NBRC 100397 / JF-1).